Here is a 307-residue protein sequence, read N- to C-terminus: Homoserine kinase (307 aa).

Residue 95 to 105 (PQSRGLGSSAS) participates in ATP binding.

The protein belongs to the GHMP kinase family. Homoserine kinase subfamily.

It is found in the cytoplasm. The enzyme catalyses L-homoserine + ATP = O-phospho-L-homoserine + ADP + H(+). It participates in amino-acid biosynthesis; L-threonine biosynthesis; L-threonine from L-aspartate: step 4/5. Functionally, catalyzes the ATP-dependent phosphorylation of L-homoserine to L-homoserine phosphate. This chain is Homoserine kinase, found in Corynebacterium aurimucosum (strain ATCC 700975 / DSM 44827 / CIP 107346 / CN-1) (Corynebacterium nigricans).